Here is a 316-residue protein sequence, read N- to C-terminus: tRNA pseudouridine synthase B (316 aa).

The active-site Nucleophile is the aspartate 47.

This sequence belongs to the pseudouridine synthase TruB family. Type 1 subfamily.

The enzyme catalyses uridine(55) in tRNA = pseudouridine(55) in tRNA. Responsible for synthesis of pseudouridine from uracil-55 in the psi GC loop of transfer RNAs. The polypeptide is tRNA pseudouridine synthase B (Aliivibrio fischeri (strain ATCC 700601 / ES114) (Vibrio fischeri)).